The chain runs to 306 residues: UDP-3-O-acyl-N-acetylglucosamine deacetylase (306 aa).

Positions 79, 238, and 242 each coordinate Zn(2+). His-265 (proton donor) is an active-site residue.

Belongs to the LpxC family. It depends on Zn(2+) as a cofactor.

It carries out the reaction a UDP-3-O-[(3R)-3-hydroxyacyl]-N-acetyl-alpha-D-glucosamine + H2O = a UDP-3-O-[(3R)-3-hydroxyacyl]-alpha-D-glucosamine + acetate. The protein operates within glycolipid biosynthesis; lipid IV(A) biosynthesis; lipid IV(A) from (3R)-3-hydroxytetradecanoyl-[acyl-carrier-protein] and UDP-N-acetyl-alpha-D-glucosamine: step 2/6. Functionally, catalyzes the hydrolysis of UDP-3-O-myristoyl-N-acetylglucosamine to form UDP-3-O-myristoylglucosamine and acetate, the committed step in lipid A biosynthesis. This is UDP-3-O-acyl-N-acetylglucosamine deacetylase from Shewanella oneidensis (strain ATCC 700550 / JCM 31522 / CIP 106686 / LMG 19005 / NCIMB 14063 / MR-1).